The sequence spans 254 residues: Alcohol dehydrogenase (254 aa).

10–33 contacts NAD(+); that stretch reads FVAGLGGIGLDTSREIVKSGPKNL. Ser138 lines the substrate pocket. Tyr151 (proton acceptor) is an active-site residue.

This sequence belongs to the short-chain dehydrogenases/reductases (SDR) family. Homodimer.

The enzyme catalyses a primary alcohol + NAD(+) = an aldehyde + NADH + H(+). It catalyses the reaction a secondary alcohol + NAD(+) = a ketone + NADH + H(+). The polypeptide is Alcohol dehydrogenase (Adh) (Drosophila nigra (Fruit fly)).